Here is a 286-residue protein sequence, read N- to C-terminus: Protease HtpX (286 aa).

Transmembrane regions (helical) follow at residues 4–24 and 33–53; these read ILLF…ILSL and TGLL…SLFL. Residue His139 participates in Zn(2+) binding. Glu140 is an active-site residue. Position 143 (His143) interacts with Zn(2+). A run of 2 helical transmembrane segments spans residues 147-167 and 186-206; these read GDMV…IFVS and IYFL…SMIA. Zn(2+) is bound at residue Glu214.

It belongs to the peptidase M48B family. Zn(2+) is required as a cofactor.

It is found in the cell inner membrane. The polypeptide is Protease HtpX (Pasteurella multocida (strain Pm70)).